Reading from the N-terminus, the 425-residue chain is Multifunctional CCA protein (425 aa).

Gly-8 and Arg-11 together coordinate ATP. Gly-8 and Arg-11 together coordinate CTP. The Mg(2+) site is built by Asp-21 and Asp-23. ATP contacts are provided by Arg-91, Arg-141, and Arg-144. CTP-binding residues include Arg-91, Arg-141, and Arg-144. The HD domain occupies 230 to 331 (TGVHLMMVLD…VRLLERCDAI (102 aa)).

It belongs to the tRNA nucleotidyltransferase/poly(A) polymerase family. Bacterial CCA-adding enzyme type 1 subfamily. Monomer. Can also form homodimers and oligomers. The cofactor is Mg(2+). Ni(2+) is required as a cofactor.

The catalysed reaction is a tRNA precursor + 2 CTP + ATP = a tRNA with a 3' CCA end + 3 diphosphate. It carries out the reaction a tRNA with a 3' CCA end + 2 CTP + ATP = a tRNA with a 3' CCACCA end + 3 diphosphate. In terms of biological role, catalyzes the addition and repair of the essential 3'-terminal CCA sequence in tRNAs without using a nucleic acid template. Adds these three nucleotides in the order of C, C, and A to the tRNA nucleotide-73, using CTP and ATP as substrates and producing inorganic pyrophosphate. tRNA 3'-terminal CCA addition is required both for tRNA processing and repair. Also involved in tRNA surveillance by mediating tandem CCA addition to generate a CCACCA at the 3' terminus of unstable tRNAs. While stable tRNAs receive only 3'-terminal CCA, unstable tRNAs are marked with CCACCA and rapidly degraded. This Acidovorax ebreus (strain TPSY) (Diaphorobacter sp. (strain TPSY)) protein is Multifunctional CCA protein.